The primary structure comprises 521 residues: Bifunctional purine biosynthesis protein PurH (521 aa).

An MGS-like domain is found at 1 to 145; the sequence is MIKQALISVS…KNHRDVTVVV (145 aa).

It belongs to the PurH family.

It catalyses the reaction (6R)-10-formyltetrahydrofolate + 5-amino-1-(5-phospho-beta-D-ribosyl)imidazole-4-carboxamide = 5-formamido-1-(5-phospho-D-ribosyl)imidazole-4-carboxamide + (6S)-5,6,7,8-tetrahydrofolate. The catalysed reaction is IMP + H2O = 5-formamido-1-(5-phospho-D-ribosyl)imidazole-4-carboxamide. It participates in purine metabolism; IMP biosynthesis via de novo pathway; 5-formamido-1-(5-phospho-D-ribosyl)imidazole-4-carboxamide from 5-amino-1-(5-phospho-D-ribosyl)imidazole-4-carboxamide (10-formyl THF route): step 1/1. It functions in the pathway purine metabolism; IMP biosynthesis via de novo pathway; IMP from 5-formamido-1-(5-phospho-D-ribosyl)imidazole-4-carboxamide: step 1/1. The polypeptide is Bifunctional purine biosynthesis protein PurH (Burkholderia ambifaria (strain ATCC BAA-244 / DSM 16087 / CCUG 44356 / LMG 19182 / AMMD) (Burkholderia cepacia (strain AMMD))).